The sequence spans 693 residues: Sister chromatid cohesion 1 protein 3 (693 aa).

Disordered stretches follow at residues 167-250 (IPMD…PGTV), 262-361 (DLSP…KNFD), 460-511 (PVSP…TFDN), and 545-573 (TQSG…GQRN). Basic and acidic residues-rich tracts occupy residues 178–201 (VSRH…EPRD) and 232–243 (TEERIPNSERND). Polar residues predominate over residues 264–277 (SPTSHPSFAAQQQD). Residues 278 to 295 (VRVERTESLDETLNEKEP) show a composition bias toward basic and acidic residues. A compositionally biased stretch (low complexity) spans 316 to 325 (RSGSPGSAAG). 2 stretches are compositionally biased toward polar residues: residues 465 to 483 (PDST…QQTE) and 545 to 564 (TQSG…TSTV).

Belongs to the rad21 family. In terms of assembly, component of the cohesin complex. In terms of tissue distribution, low expression in shoots, buds, siliques, leaves and roots. Found in, but not limited to, actively dividing cells: in procambium, protoderm and ground meristem in roots, and in shoot and floral meristems.

Its subcellular location is the nucleus. Its function is as follows. May be involved in sister chromatid cohesion during mitosis. The sequence is that of Sister chromatid cohesion 1 protein 3 (SYN3) from Arabidopsis thaliana (Mouse-ear cress).